A 311-amino-acid polypeptide reads, in one-letter code: AT-hook motif nuclear-localized protein 27 (311 aa).

The interval 40–105 (HHHQHQQHQQ…KNKAKPPIIV (66 aa)) is disordered. Basic and acidic residues predominate over residues 55 to 75 (DDSRESDHSNKDHHQQGRPDS). Positions 86–98 (KRPRGRPPGSKNK) form a DNA-binding region, a.T hook. Residues 110 to 258 (PNALRSHVLE…EEGGGGGGGG (149 aa)) form the PPC domain. The interval 178 to 183 (GRFEIL) is required for the binding to non-AHL interactors. The tract at residues 246–311 (EEEEEGGGGG…GAGTPSRPPF (66 aa)) is disordered. Positions 252–262 (GGGGGGGGGGP) are enriched in gly residues. Over residues 263-277 (PQMQQAPSASPPSGV) the composition is skewed to low complexity. Positions 278–292 (TGQGQLGGNVGGYGF) are enriched in gly residues.

Homodimer. Interacts with AHL12, AHL25, AHL29, TCP4, TCP13, EF114, ATAF2/NAC081, histone H2B.1, histone H3.3 and histone H4. In terms of tissue distribution, expressed in the hypocotyl and the vascular tissue of seedling.

It localises to the nucleus. In terms of biological role, transcription factor that specifically binds AT-rich DNA sequences related to the nuclear matrix attachment regions (MARs). Negatively regulates plant innate immunity (PTI) to pathogens through the down-regulation of the PAMP-triggered FRK1 expression. Acts redundantly with AHL18, AHL22 and AHL29 in the regulation of flowering and regulation of the hypocotyl elongation. Acts as a chromatin remodeling factor that negatively regulates the leaf senescence. Acts redundantly with AHL29/SOB3 to modulate hypocotyl growth inhibition in response to light. The sequence is that of AT-hook motif nuclear-localized protein 27 from Arabidopsis thaliana (Mouse-ear cress).